A 448-amino-acid chain; its full sequence is UDP-glucose 6-dehydrogenase (448 aa).

NAD(+)-binding positions include 2–19 (NITFIGSGYVGLVSGIIM), Val-11, Asp-30, Lys-35, Thr-121, and Glu-152. Substrate contacts are provided by residues 148 to 152 (EFLRE), Lys-204, Asn-208, 249 to 253 (FLNAG), and Gly-257. Cys-260 serves as the catalytic Nucleophile. NAD(+) is bound at residue Lys-263. Lys-321 is a binding site for substrate. Arg-328 contributes to the NAD(+) binding site.

Belongs to the UDP-glucose/GDP-mannose dehydrogenase family.

It catalyses the reaction UDP-alpha-D-glucose + 2 NAD(+) + H2O = UDP-alpha-D-glucuronate + 2 NADH + 3 H(+). It functions in the pathway nucleotide-sugar biosynthesis; UDP-alpha-D-glucuronate biosynthesis; UDP-alpha-D-glucuronate from UDP-alpha-D-glucose: step 1/1. The chain is UDP-glucose 6-dehydrogenase (udg) from Rickettsia felis (strain ATCC VR-1525 / URRWXCal2) (Rickettsia azadi).